The sequence spans 383 residues: Putative protein FAM157A (383 aa).

Disordered regions lie at residues 1–21 and 177–254; these read MGPL…PLPK and ATAR…PLGR.

It belongs to the FAM157 family.

This chain is Putative protein FAM157A (FAM157A), found in Homo sapiens (Human).